A 416-amino-acid polypeptide reads, in one-letter code: Counting factor 60 (416 aa).

An N-terminal signal peptide occupies residues 1–22 (MIKKSALITLFLVSLILGVSLS). Residues asparagine 110, asparagine 218, asparagine 231, asparagine 318, and asparagine 411 are each glycosylated (N-linked (GlcNAc...) asparagine).

This sequence belongs to the histidine acid phosphatase family. Component of the counting factor (CF) complex, which includes cf60, cf50, cf45-1 and ctnA.

The protein resides in the secreted. Cell-counting factor that limits the maximum size of the multicellular structure. Does not possess acid phosphatase activity. Cells with decreased levels of this protein form large groups while cells overexpressing this protein form small groups. The chain is Counting factor 60 (cf60) from Dictyostelium discoideum (Social amoeba).